The primary structure comprises 798 residues: MEAGEGKERVPKQRQVLIFFVLLGIAQASCQPRHYSVAEETESGSFVANLLKDLGLEIGELAVRGARVVSKGKKMHLQFDRQTGDLLLNEKLDREELCGPTEPCVLPFQVLLENPLQFFQAELRIRDVNDHSPVFLDKEILLKIPESITPGTTFLIERAQDLDVGTNSLQNYTISPNFHFHLNLQDSLDGIILPQLVLNRALDREEQPEIRLTLTALDGGSPPRSGTALVRIEVVDINDNVPEFAKLLYEVQIPEDSPVGSQVAIVSARDLDIGTNGEISYAFSQASEDIRKTFRLSAKSGELLLRQKLDFESIQTYTVNIQATDGGGLSGTCVVFVQVMDLNDNPPELTMSTLINQIPENLQDTLIAVFSVSDPDSGDNGRMVCSIQDDLPFFLKPSVENFYTLVISTALDRETRSEYNITITVTDFGTPRLKTEHNITVLVSDVNDNAPAFTQTSYTLFVRENNSPALHIGSVSATDRDSGTNAQVTYSLLPPQDPHLPLASLVSINADNGHLFALQSLDYEALQAFEFRVGAADRGSPALSSEALVRVLVLDANDNSPFVLYPLQNGSAPCTELVPRAAEPGYLVTKVVAVDGDSGQNAWLSYQLLKATEPGLFGVWAHNGEVRTARLLRERDAAKQRLVVLVKDNGEPPRSATATLHVLLVDGFSQPYLLLPEAAPAQAQADLLTVYLVVALASVSSLFLFSVLLFVAVRLCRRSRAASVGRCSVPEGPFPGQMVDVSGTGTLSQSYQYEVCLTGGSGTNEFKFLKPIIPNFVAQGAERVSEANPSFRKSFEFT.

An N-terminal signal peptide occupies residues 1-30 (MEAGEGKERVPKQRQVLIFFVLLGIAQASC). Residues 31 to 692 (QPRHYSVAEE…AQADLLTVYL (662 aa)) are Extracellular-facing. Cadherin domains lie at 37-135 (VAEE…SPVF), 136-244 (LDKE…VPEF), 249-349 (YEVQ…PPEL), 354-453 (LINQ…APAF), and 458-563 (YTLF…SPFV). The N-linked (GlcNAc...) asparagine glycan is linked to asparagine 171. Lysine 299 is modified (N6-acetyllysine). N-linked (GlcNAc...) asparagine glycosylation is found at asparagine 420 and asparagine 438. The N-linked (GlcNAc...) asparagine glycan is linked to asparagine 569. Positions 570 to 673 (GSAPCTELVP…LVDGFSQPYL (104 aa)) constitute a Cadherin 6 domain. The helical transmembrane segment at 693–713 (VVALASVSSLFLFSVLLFVAV) threads the bilayer. Over 714–798 (RLCRRSRAAS…PSFRKSFEFT (85 aa)) the chain is Cytoplasmic.

It is found in the cell membrane. Its function is as follows. Potential calcium-dependent cell-adhesion protein. May be involved in the establishment and maintenance of specific neuronal connections in the brain. This Homo sapiens (Human) protein is Protocadherin beta-2 (PCDHB2).